The sequence spans 1227 residues: JNK-interacting protein 3 (1227 aa).

The tract at residues Met1–Tyr22 is disordered. The region spanning Glu25–Ala113 is the RH1 domain. A coiled-coil region spans residues Arg84–Tyr191. Residues Asp281 to Leu323 form a disordered region. Residues Thr290–Val308 are compositionally biased toward low complexity. A coiled-coil region spans residues Gly363 to Arg489. One can recognise an RH2 domain in the interval Arg453–Ala524. Disordered stretches follow at residues Asn517–Ser572, Gly804–Pro851, and Pro863–Asn889. Residues Gly526 to Ser540 show a composition bias toward gly residues. A compositionally biased stretch (low complexity) spans Pro541–Arg550. Basic and acidic residues predominate over residues Glu807 to Asp817. The stretch at Lys814–Glu849 forms a coiled coil. Low complexity predominate over residues Asn879–Asn889.

Belongs to the JIP scaffold family. As to quaternary structure, forms homo- and heterooligomeric complexes. Binds the TPR motif-containing C-terminal of kinesin light chain, Klc. Pre-assembled syd scaffolding complexes are then transported as a cargo of kinesin, to the required subcellular location.

Its subcellular location is the cytoplasm. In terms of biological role, the JNK-interacting protein (JIP) group of scaffold proteins selectively mediates JNK-signaling by aggregating specific components of the MAPK cascade to form a functional JNK signaling module. May function as a regulator of vesicle transport, through interactions with the JNK-signaling components and motor proteins. Syd is required for efficient kinesin-I mediated axonal transport. The sequence is that of JNK-interacting protein 3 (syd) from Drosophila melanogaster (Fruit fly).